Here is a 209-residue protein sequence, read N- to C-terminus: Octanoyltransferase (209 aa).

In terms of domain architecture, BPL/LPL catalytic spans 30-209 (VNEPEIVYLV…IQTEFNKIFT (180 aa)). Substrate contacts are provided by residues 69–76 (RGGKFTFH), 143–145 (AIG), and 156–158 (GVA). C174 serves as the catalytic Acyl-thioester intermediate.

It belongs to the LipB family.

The protein localises to the cytoplasm. The enzyme catalyses octanoyl-[ACP] + L-lysyl-[protein] = N(6)-octanoyl-L-lysyl-[protein] + holo-[ACP] + H(+). The protein operates within protein modification; protein lipoylation via endogenous pathway; protein N(6)-(lipoyl)lysine from octanoyl-[acyl-carrier-protein]: step 1/2. Functionally, catalyzes the transfer of endogenously produced octanoic acid from octanoyl-acyl-carrier-protein onto the lipoyl domains of lipoate-dependent enzymes. Lipoyl-ACP can also act as a substrate although octanoyl-ACP is likely to be the physiological substrate. This Rickettsia canadensis (strain McKiel) protein is Octanoyltransferase.